The primary structure comprises 84 residues: METVITATIIGASILLAFAALGTAIGFAILGGKFLESSARQPELASSLQTKMFIVAGLLDAIAMIAVGISLLFIFANPFIDLLK.

2 consecutive transmembrane segments (helical) span residues 9 to 29 (IIGA…GFAI) and 54 to 74 (IVAG…LLFI).

Belongs to the ATPase C chain family. As to quaternary structure, F-type ATPases have 2 components, F(1) - the catalytic core - and F(0) - the membrane proton channel. F(1) has five subunits: alpha(3), beta(3), gamma(1), delta(1), epsilon(1). F(0) has three main subunits: a(1), b(2) and c(10-14). The alpha and beta chains form an alternating ring which encloses part of the gamma chain. F(1) is attached to F(0) by a central stalk formed by the gamma and epsilon chains, while a peripheral stalk is formed by the delta and b chains.

Its subcellular location is the cell inner membrane. Its function is as follows. F(1)F(0) ATP synthase produces ATP from ADP in the presence of a proton or sodium gradient. F-type ATPases consist of two structural domains, F(1) containing the extramembraneous catalytic core and F(0) containing the membrane proton channel, linked together by a central stalk and a peripheral stalk. During catalysis, ATP synthesis in the catalytic domain of F(1) is coupled via a rotary mechanism of the central stalk subunits to proton translocation. In terms of biological role, key component of the F(0) channel; it plays a direct role in translocation across the membrane. A homomeric c-ring of between 10-14 subunits forms the central stalk rotor element with the F(1) delta and epsilon subunits. This chain is ATP synthase subunit c, found in Glaesserella parasuis serovar 5 (strain SH0165) (Haemophilus parasuis).